Reading from the N-terminus, the 484-residue chain is ATP synthase subunit beta (484 aa).

162–169 (GGAGVGKT) provides a ligand contact to ATP.

It belongs to the ATPase alpha/beta chains family. In terms of assembly, F-type ATPases have 2 components, CF(1) - the catalytic core - and CF(0) - the membrane proton channel. CF(1) has five subunits: alpha(3), beta(3), gamma(1), delta(1), epsilon(1). CF(0) has three main subunits: a(1), b(2) and c(9-12). The alpha and beta chains form an alternating ring which encloses part of the gamma chain. CF(1) is attached to CF(0) by a central stalk formed by the gamma and epsilon chains, while a peripheral stalk is formed by the delta and b chains.

The protein localises to the cell inner membrane. It carries out the reaction ATP + H2O + 4 H(+)(in) = ADP + phosphate + 5 H(+)(out). Its function is as follows. Produces ATP from ADP in the presence of a proton gradient across the membrane. The catalytic sites are hosted primarily by the beta subunits. This Agrobacterium fabrum (strain C58 / ATCC 33970) (Agrobacterium tumefaciens (strain C58)) protein is ATP synthase subunit beta.